The sequence spans 349 residues: Phenylalanine--tRNA ligase alpha subunit (349 aa).

Glu258 is a binding site for Mg(2+).

It belongs to the class-II aminoacyl-tRNA synthetase family. Phe-tRNA synthetase alpha subunit type 1 subfamily. Tetramer of two alpha and two beta subunits. Mg(2+) is required as a cofactor.

Its subcellular location is the cytoplasm. The catalysed reaction is tRNA(Phe) + L-phenylalanine + ATP = L-phenylalanyl-tRNA(Phe) + AMP + diphosphate + H(+). In Rickettsia africae (strain ESF-5), this protein is Phenylalanine--tRNA ligase alpha subunit.